The primary structure comprises 652 residues: MPTTPLLLAALAALAALAVAAYPSCSPGPDPSGKCQRLASTHSATCVDLHLRTCADAAYNHTSFPTPLEHRSWEAVEASPEYTLLGVLHFLLEGQCNPDLRLLGCSVLAPRCQGGHTQRPCRRVCEGLREACQPAFDAIDMAWPYFLDCTQYFAPEEEGCYDPLEQLRGELDVEEALPSGLPPTFIRFAHHSYAQMVRVLKRTAARCSQVAKTYSIGRSFEGKDLVVIEFSSRPGQHELMEPEVKLIGNIHGNEVAGREILIYLAQYLCSEYLLGNPRIQRLLNTTRIHLLPSMNPDGYEVAAAEGAGYNGWTSGRQNAQNLDLNRNFPDLTSEYYRLASTRGVRTDHIPISQYYWWGKVAPETKAIMKWIQTIPFVLSASLHGGDLVVSYPFDFSKHPHEEKMFSPTPDEKMFKLLARAYADVHPMMMDRSENRCGGNFLKRGSIINGADWYSFTGGMSDFNYLHTNCFEITVELGCVKFPPEEALYGLWQHNKEPLLNFLEMVHRGIKGVVTDKYGKPVKNARILVKGIRHDVTTAPDGDYWRLLPPGSHIVIAQAPGYSKVMKRVTIPLRMKRAGRVDFILQPLGTGPKNFLPGPSRALPRSLDPQGAPAQLDFEPPRARRQPASGSKPWWWAYFTSLSPHKPRWLLKY.

The first 20 residues, 1 to 20 (MPTTPLLLAALAALAALAVA), serve as a signal peptide directing secretion. One can recognise an FZ domain in the interval 41–163 (THSATCVDLH…APEEEGCYDP (123 aa)). 5 disulfide bridges follow: Cys46/Cys112, Cys54/Cys105, Cys96/Cys132, Cys121/Cys160, and Cys125/Cys149. The N-linked (GlcNAc...) asparagine glycan is linked to Asn60. Residues 189-505 (AHHSYAQMVR…EPLLNFLEMV (317 aa)) form the Peptidase M14 domain. 2 residues coordinate Zn(2+): His251 and Glu254. N-linked (GlcNAc...) asparagine glycosylation is present at Asn284. His383 serves as a coordination point for Zn(2+). The Proton donor/acceptor role is filled by Glu475. A disordered region spans residues 594–628 (FLPGPSRALPRSLDPQGAPAQLDFEPPRARRQPAS).

This sequence belongs to the peptidase M14 family. Zn(2+) serves as cofactor. Abundantly expressed in the placenta, with low to moderate levels in the brain, lung, thymus and kidney.

The protein resides in the secreted. It localises to the extracellular space. The protein localises to the extracellular matrix. With respect to regulation, inhibited by 2-mercaptomethyl-3-guanidinoethylthiopropanoic acid (MGTA) and guanidinoethylmercaptosuccinic acid (GEMSA). Inhibited by chelating agents such as EDTA and EGTA. In terms of biological role, cleaves substrates with C-terminal arginine residues. Probably modulates the Wnt signaling pathway, by cleaving some undefined protein. May play a role in cleavage during prohormone processing. This chain is Carboxypeptidase Z (Cpz), found in Rattus norvegicus (Rat).